The primary structure comprises 346 residues: Probable electron transfer flavoprotein subunit alpha, mitochondrial (346 aa).

Leucine 285–aspartate 313 provides a ligand contact to FAD.

Belongs to the ETF alpha-subunit/FixB family. Heterodimer of an alpha and a beta subunit. The cofactor is FAD.

The protein resides in the mitochondrion matrix. Its function is as follows. The electron transfer flavoprotein serves as a specific electron acceptor for several dehydrogenases, including five acyl-CoA dehydrogenases, glutaryl-CoA and sarcosine dehydrogenase. It transfers the electrons to the main mitochondrial respiratory chain via ETF-ubiquinone oxidoreductase (ETF dehydrogenase). This Cryptococcus neoformans var. grubii (Filobasidiella neoformans var. grubii) protein is Probable electron transfer flavoprotein subunit alpha, mitochondrial (ETF1).